The following is a 142-amino-acid chain: Small ribosomal subunit protein uS12 (142 aa).

Belongs to the universal ribosomal protein uS12 family. Part of the 30S ribosomal subunit.

In terms of biological role, with S4 and S5 plays an important role in translational accuracy. Located at the interface of the 30S and 50S subunits. The chain is Small ribosomal subunit protein uS12 from Methanoregula boonei (strain DSM 21154 / JCM 14090 / 6A8).